We begin with the raw amino-acid sequence, 180 residues long: ATP synthase subunit b (180 aa).

Residues 26-46 (IPLMLATLAALVISIFFLTYF) form a helical membrane-spanning segment.

Belongs to the ATPase B chain family. F-type ATPases have 2 components, F(1) - the catalytic core - and F(0) - the membrane proton channel. F(1) has five subunits: alpha(3), beta(3), gamma(1), delta(1), epsilon(1). F(0) has three main subunits: a(1), b(2) and c(10-14). The alpha and beta chains form an alternating ring which encloses part of the gamma chain. F(1) is attached to F(0) by a central stalk formed by the gamma and epsilon chains, while a peripheral stalk is formed by the delta and b chains.

The protein resides in the cell membrane. Functionally, f(1)F(0) ATP synthase produces ATP from ADP in the presence of a proton or sodium gradient. F-type ATPases consist of two structural domains, F(1) containing the extramembraneous catalytic core and F(0) containing the membrane proton channel, linked together by a central stalk and a peripheral stalk. During catalysis, ATP synthesis in the catalytic domain of F(1) is coupled via a rotary mechanism of the central stalk subunits to proton translocation. Its function is as follows. Component of the F(0) channel, it forms part of the peripheral stalk, linking F(1) to F(0). The protein is ATP synthase subunit b of Mycoplasmopsis pulmonis (strain UAB CTIP) (Mycoplasma pulmonis).